The primary structure comprises 350 residues: uncharacterized protein (350 aa).

3 helical membrane passes run 10 to 30 (YSFILCLAVGSVTIYTSEVIG), 51 to 71 (FAGILFTALVQLFSPTPVTLT), and 327 to 347 (ILSLFSVLFTCIVAGLFLKLF).

This sequence belongs to the 1-acyl-sn-glycerol-3-phosphate acyltransferase family.

Its subcellular location is the endoplasmic reticulum membrane. This is an uncharacterized protein from Schizosaccharomyces pombe (strain 972 / ATCC 24843) (Fission yeast).